Consider the following 241-residue polypeptide: MKLFVYHTPELTPTDDLPDCAVVIDVLRATTTIATALNAGAEAVQAFSSLEQLMEVSETWLPEKRLRAGERGGAKVKECDLGNSPLDCTPTVVEGKRLFISTTNGTRALQRVEHSQIVIAAALINRQTVVNYLLSEHPSTVWLLGSGWQGGYSLEDAVCAGAIADLLLQHLEGVEIGNDEVIAALALYRQWQTNLLDMFYKSSHGQRLLGLNCHEDLKYCSQTDVLEVLPIQKEPGVLIKY.

Belongs to the ComB family. Mg(2+) serves as cofactor.

The enzyme catalyses (2R)-O-phospho-3-sulfolactate + H2O = (2R)-3-sulfolactate + phosphate. In Gloeothece citriformis (strain PCC 7424) (Cyanothece sp. (strain PCC 7424)), this protein is Probable 2-phosphosulfolactate phosphatase.